The chain runs to 438 residues: MQVTVEKKEGIHCSLLIEVPANEIDSVVSKEINRTAKTIKMDGFRPGKVPAGMVKKKYGEQIRMEVISDLIPQKYSKAIQDEKLAVAGIEVELKENKEGQPLKFVANLELFPEFEVTGFEKIEVQKPVVELTDKEVKQMIENLRKQFATFSEVDKAVEKDDKVTIDFVGKKDGEAFEGGTANDTDVIIGSGQMIPGFEDGIIGMKKGEQKTITVTFPQDYQNKDLAGAETTFDITVKKIQQAELPEVNDEFVKKFGVKGGVDTFENEIKENMQRELKFILQRKVKDQVFKGLREIAEFETPKSLIKREIDAAKQNLLKQMGGAKGFDVNQLPDNLFEANAKQKVETSLILDSIMNSQEFKAEEAEVESLLDELVQAYEEPEKTKEQIKKNDKEMANLKALVIENKLTDWVLEQAKVTEKTEDFFEVIKENMQAQQAGF.

In terms of domain architecture, PPIase FKBP-type spans 160-245 (DDKVTIDFVG…VKKIQQAELP (86 aa)).

Belongs to the FKBP-type PPIase family. Tig subfamily.

It is found in the cytoplasm. It catalyses the reaction [protein]-peptidylproline (omega=180) = [protein]-peptidylproline (omega=0). In terms of biological role, involved in protein export. Acts as a chaperone by maintaining the newly synthesized protein in an open conformation. Functions as a peptidyl-prolyl cis-trans isomerase. This Francisella tularensis subsp. novicida (strain U112) protein is Trigger factor.